A 59-amino-acid polypeptide reads, in one-letter code: uncharacterized protein (59 aa).

This is an uncharacterized protein from Dictyostelium discoideum (Social amoeba).